The chain runs to 225 residues: Cobalt transport protein CbiM (225 aa).

Helical transmembrane passes span 7–27 (VLPL…VAIA), 43–63 (PFVG…VPVP), 76–96 (LAAV…ALLI), 108–128 (TLGA…YFAF), 143–163 (FLAG…ALAL), and 175–195 (FTGV…LEGV).

It belongs to the CbiM family. In terms of assembly, forms an energy-coupling factor (ECF) transporter complex composed of an ATP-binding protein (A component, CbiO), a transmembrane protein (T component, CbiQ) and 2 possible substrate-capture proteins (S components, CbiM and CbiN) of unknown stoichimetry.

It localises to the cell inner membrane. It functions in the pathway cofactor biosynthesis; adenosylcobalamin biosynthesis. Part of the energy-coupling factor (ECF) transporter complex CbiMNOQ involved in cobalt import. In Sorangium cellulosum (strain So ce56) (Polyangium cellulosum (strain So ce56)), this protein is Cobalt transport protein CbiM.